The sequence spans 98 residues: Class II hydrophobin 5 (98 aa).

Residues 1–17 (MQFSLALVTLLATAVSA) form the signal peptide. 4 cysteine pairs are disulfide-bonded: cysteine 30/cysteine 78, cysteine 39/cysteine 69, cysteine 40/cysteine 52, and cysteine 79/cysteine 90.

It belongs to the cerato-ulmin hydrophobin family.

It is found in the secreted. The protein localises to the cell wall. Functionally, aerial growth, conidiation, and dispersal of filamentous fungi in the environment rely upon a capability of their secreting small amphipathic proteins called hydrophobins (HPBs) with low sequence identity. Class I can self-assemble into an outermost layer of rodlet bundles on aerial cell surfaces, conferring cellular hydrophobicity that supports fungal growth, development and dispersal; whereas Class II form highly ordered films at water-air interfaces through intermolecular interactions but contribute nothing to the rodlet structure. Does not seem to be important for the ability to cause seedling disease. The chain is Class II hydrophobin 5 from Gibberella moniliformis (Maize ear and stalk rot fungus).